Reading from the N-terminus, the 232-residue chain is ATP phosphoribosyltransferase (232 aa).

It belongs to the ATP phosphoribosyltransferase family. Short subfamily. Heteromultimer composed of HisG and HisZ subunits.

It is found in the cytoplasm. The catalysed reaction is 1-(5-phospho-beta-D-ribosyl)-ATP + diphosphate = 5-phospho-alpha-D-ribose 1-diphosphate + ATP. Its pathway is amino-acid biosynthesis; L-histidine biosynthesis; L-histidine from 5-phospho-alpha-D-ribose 1-diphosphate: step 1/9. Catalyzes the condensation of ATP and 5-phosphoribose 1-diphosphate to form N'-(5'-phosphoribosyl)-ATP (PR-ATP). Has a crucial role in the pathway because the rate of histidine biosynthesis seems to be controlled primarily by regulation of HisG enzymatic activity. The protein is ATP phosphoribosyltransferase (hisG) of Mesorhizobium japonicum (strain LMG 29417 / CECT 9101 / MAFF 303099) (Mesorhizobium loti (strain MAFF 303099)).